A 264-amino-acid chain; its full sequence is Granzyme K (264 aa).

Residues 1–24 (MTKFSSFSLFFLIVGAYMTHVCFN) form the signal peptide. A propeptide spans 25-26 (ME) (activation peptide). One can recognise a Peptidase S1 domain in the interval 27-259 (IIGGKEVSPH…YQTWIKSNLV (233 aa)). Residues Cys-52 and Cys-68 are joined by a disulfide bond. Active-site charge relay system residues include His-67 and Asp-116. 3 disulfide bridges follow: Cys-149–Cys-220, Cys-181–Cys-199, and Cys-210–Cys-234. Ser-214 functions as the Charge relay system in the catalytic mechanism.

Belongs to the peptidase S1 family. Granzyme subfamily. As to expression, expressed in lung, spleen, thymus and peripheral blood leukocytes.

The protein resides in the secreted. It is found in the cytoplasmic granule. This Homo sapiens (Human) protein is Granzyme K (GZMK).